The sequence spans 904 residues: Putative pentatricopeptide repeat-containing protein At1g19290 (904 aa).

PPR repeat units lie at residues 154–188 (SPTV…GRIP), 189–223 (SLLS…EVSP), 224–254 (DVFT…TESS), 260–294 (NVVT…GVSR), 295–329 (NVVT…KLVA), 330–364 (DQHM…GVRT), 365–399 (NTTI…SLKP), 400–434 (DHHT…EVVP), 435–469 (TVMT…GVNA), 470–504 (DEIS…GLLT), 505–539 (DTIT…RCKP), 540–574 (AVQT…GIFP), 575–609 (TIEM…GLTP), 610–644 (TVAT…GITL), 645–679 (NVNI…DLLL), 718–753 (NNIV…RFIP), 754–788 (DEYT…GIIP), 789–823 (NIVT…GITP), and 824–858 (NAIT…GLVR).

The protein belongs to the PPR family. P subfamily.

This Arabidopsis thaliana (Mouse-ear cress) protein is Putative pentatricopeptide repeat-containing protein At1g19290.